The chain runs to 364 residues: Fructose-bisphosphate aldolase B (364 aa).

Ala-2 is modified (N-acetylalanine). Lys-13 carries the post-translational modification N6-succinyllysine. Residue Ser-36 is modified to Phosphoserine. The residue at position 39 (Thr-39) is a Phosphothreonine. Position 43 (Arg-43) interacts with beta-D-fructose 1,6-bisphosphate. Residue Ser-89 is modified to Phosphoserine. Position 119 is a phosphothreonine (Thr-119). An N6-succinyllysine modification is found at Lys-121. At Ser-132 the chain carries Phosphoserine. Glu-188 functions as the Proton acceptor in the catalytic mechanism. Lys-230 (schiff-base intermediate with dihydroxyacetone-P) is an active-site residue. Phosphoserine is present on residues Ser-272, Ser-276, Ser-299, and Ser-301. 272 to 274 (SGG) lines the beta-D-fructose 1,6-bisphosphate pocket. Residue Arg-304 participates in beta-D-fructose 1,6-bisphosphate binding. Ser-309 carries the phosphoserine modification. Lys-317 is modified (N6-succinyllysine).

Belongs to the class I fructose-bisphosphate aldolase family. In terms of assembly, homotetramer. Interacts with BBS1, BBS2, BBS4 and BBS7. Forms a ternary complex with G6PD and TP53; this interaction is direct.

Its subcellular location is the cytoplasm. The protein resides in the cytosol. It is found in the cytoskeleton. The protein localises to the microtubule organizing center. It localises to the centrosome. Its subcellular location is the centriolar satellite. The enzyme catalyses beta-D-fructose 1,6-bisphosphate = D-glyceraldehyde 3-phosphate + dihydroxyacetone phosphate. It catalyses the reaction beta-D-fructose 1-phosphate = D-glyceraldehyde + dihydroxyacetone phosphate. Its pathway is carbohydrate degradation; glycolysis; D-glyceraldehyde 3-phosphate and glycerone phosphate from D-glucose: step 4/4. The protein operates within carbohydrate biosynthesis; gluconeogenesis. It functions in the pathway carbohydrate metabolism; fructose metabolism. Catalyzes the aldol cleavage of fructose 1,6-biphosphate to form two triosephosphates dihydroxyacetone phosphate and D-glyceraldehyde 3-phosphate in glycolysis as well as the reverse stereospecific aldol addition reaction in gluconeogenesis. In fructolysis, metabolizes fructose 1-phosphate derived from the phosphorylation of dietary fructose by fructokinase into dihydroxyacetone phosphate and D-glyceraldehyde. Acts as an adapter independently of its enzymatic activity, exerts a tumor suppressor role by stabilizing the ternary complex with G6PD and TP53 to inhibit G6PD activity and keep oxidative pentose phosphate metabolism in check. This Oryctolagus cuniculus (Rabbit) protein is Fructose-bisphosphate aldolase B (ALDOB).